The primary structure comprises 141 residues: Large ribosomal subunit protein uL11 (141 aa).

Belongs to the universal ribosomal protein uL11 family. In terms of assembly, part of the ribosomal stalk of the 50S ribosomal subunit. Interacts with L10 and the large rRNA to form the base of the stalk. L10 forms an elongated spine to which L12 dimers bind in a sequential fashion forming a multimeric L10(L12)X complex. Post-translationally, one or more lysine residues are methylated.

Functionally, forms part of the ribosomal stalk which helps the ribosome interact with GTP-bound translation factors. This chain is Large ribosomal subunit protein uL11, found in Chlorobaculum tepidum (strain ATCC 49652 / DSM 12025 / NBRC 103806 / TLS) (Chlorobium tepidum).